The sequence spans 179 residues: Large ribosomal subunit protein uL5c (179 aa).

This sequence belongs to the universal ribosomal protein uL5 family. As to quaternary structure, part of the 50S ribosomal subunit; contacts the 5S rRNA.

The protein localises to the plastid. Functionally, binds 5S rRNA, forms part of the central protuberance of the 50S subunit. This is Large ribosomal subunit protein uL5c (rpl5) from Euglena longa (Euglenophycean alga).